Consider the following 233-residue polypeptide: Protein lin-7 homolog A (233 aa).

The L27 domain occupies 25–80; the sequence is LDRDVARAIELLEKLQESGEVPVHKLQSLKKVLQSEFCTAIREVYQYMHETITVNG. The PDZ domain occupies 108–190; that stretch reads VVELPKTDEG…SVKLVVRYTP (83 aa).

The protein belongs to the lin-7 family. As to quaternary structure, forms a complex with CASK and CASKIN1. Component of the brain-specific heterotrimeric complex (LIN-10-LIN-2-LIN-7 complex) composed of at least APBA1, CASK, and LIN7, which associates with the motor protein KIF17 to transport vesicles along microtubules. Can also interact with other modular proteins containing protein-protein interaction domains like PALS1, PALS2, MPP7, DLG1, DLG2 and DLG3 through its L27 domain. Interacts with DLG4, GRIN2B and MARCHF11 as well as CDH1 and CTNNB1, the channels KCNJ12/Kir2.2, KCNJ4/Kir2.3 and probably KCNJ2/Kir2.1 and SLC6A12/BGT-1 via its PDZ domain. The association of LIN7A with cadherin and beta-catenin is calcium-dependent, occurs at synaptic junctions and requires the actin cytoskeleton. Interacts with EGFR, ERBB2, ERBB3 and ERBB4 with both PDZ and KID domains. Associates with KIF17 via APBA1. Interacts with HTR4. Forms a tripartite complex composed of DLG1, MPP7 and LIN7 (LIN7A or LIN7C).

The protein resides in the cell membrane. Its subcellular location is the basolateral cell membrane. It localises to the cell junction. It is found in the postsynaptic density membrane. The protein localises to the tight junction. Its function is as follows. Plays a role in establishing and maintaining the asymmetric distribution of channels and receptors at the plasma membrane of polarized cells. Forms membrane-associated multiprotein complexes that may regulate delivery and recycling of proteins to the correct membrane domains. The tripartite complex composed of LIN7 (LIN7A, LIN7B or LIN7C), CASK and APBA1 associates with the motor protein KIF17 to transport vesicles containing N-methyl-D-aspartate (NMDA) receptor subunit NR2B along microtubules. This complex may have the potential to couple synaptic vesicle exocytosis to cell adhesion in brain. Ensures the proper localization of GRIN2B (subunit 2B of the NMDA receptor) to neuronal postsynaptic density and may function in localizing synaptic vesicles at synapses where it is recruited by beta-catenin and cadherin. Required to localize Kir2 channels, GABA transporter (SLC6A12) and EGFR/ERBB1, ERBB2, ERBB3 and ERBB4 to the basolateral membrane of epithelial cells. The polypeptide is Protein lin-7 homolog A (LIN7A) (Bos taurus (Bovine)).